The sequence spans 286 residues: Acetylglutamate kinase (286 aa).

Substrate contacts are provided by residues 63–64, Arg85, and Asn178; that span reads GG.

The protein belongs to the acetylglutamate kinase family. ArgB subfamily.

The protein localises to the cytoplasm. The enzyme catalyses N-acetyl-L-glutamate + ATP = N-acetyl-L-glutamyl 5-phosphate + ADP. It functions in the pathway amino-acid biosynthesis; L-arginine biosynthesis; N(2)-acetyl-L-ornithine from L-glutamate: step 2/4. Functionally, catalyzes the ATP-dependent phosphorylation of N-acetyl-L-glutamate. The chain is Acetylglutamate kinase from Clostridioides difficile (strain 630) (Peptoclostridium difficile).